Here is a 250-residue protein sequence, read N- to C-terminus: Probable phosphatase VPA1527 (250 aa).

Residues H8, H10, H16, H41, E74, H102, H132, D194, and H196 each coordinate Zn(2+).

This sequence belongs to the PHP family. It depends on Zn(2+) as a cofactor.

The chain is Probable phosphatase VPA1527 from Vibrio parahaemolyticus serotype O3:K6 (strain RIMD 2210633).